A 131-amino-acid polypeptide reads, in one-letter code: MLCPVLLCATLLLLTPFEVTEARALHPSADAVQFVEQFLDRYNDLLTLDDLENLLNTQPEEQSTLSSGVKTAEYPKWADLQTQPETPWFRLLKGALTNQKRAEPDRSRRGWNRGCFGLKLDRIGSMSGLGC.

A signal peptide spans 1-22; sequence MLCPVLLCATLLLLTPFEVTEA. Residues 23–109 constitute a propeptide that is removed on maturation; that stretch reads RALHPSADAV…KRAEPDRSRR (87 aa). A disulfide bridge links Cys-115 with Cys-131.

It belongs to the natriuretic peptide family. Brain and spinal cord.

The protein resides in the secreted. Functionally, exhibits natriuretic and vasodepressant activity. Has cGMP-stimulating activity. May help to regulate body fluid homeostasis in a variety of aquatic environments. In Oryzias latipes (Japanese rice fish), this protein is C-type natriuretic peptide 1.